The chain runs to 462 residues: MAQLSAMDVYNLLPKANCGACGCKTCMEFATKLVNREAKPEDCPKLDDESLEKLQELLAPPVKELTIGEGDREVTVGGDEVMFRHELSFFNPPPVFVTVYDDMEEDEIAGKTEEIQEFQVERVGEVLKLDGVAVVSRTGDPEKYARAVEIAVERSEDLAVALITTDPKVMEAGLDVFDERPLLYPATEENVEDLAKLAADGDCPLGLHARDVEDLVPLVVEAQQYTDDLLLDPGTEFGPHDVVSTTDKLAEIRKAAIEEFESFGYPTLVTTFPYAFLEDDPVKAARRESYLASACVLRYADILIMDTVEPWALLPVLTQRQCVYTDPREPQEVEPGLYRIGDPDENSPVLVTTNFTLTYHCVAGDLESADIDCWLLVIDTGGLAVDVSVAGGQFTGEAVKEVIEETDIEDKVEHRVLVIPGKAAAVKGDVEDATGWDVMIGTQDSSELPEFLEKEGLLRIEE.

A 4Fe-4S domain is found at 1-60; sequence MAQLSAMDVYNLLPKANCGACGCKTCMEFATKLVNREAKPEDCPKLDDESLEKLQELLAP. 4 residues coordinate [4Fe-4S] cluster: C18, C21, C26, and C43.

In terms of assembly, heterodimer of delta and gamma chains. The ACDS complex is made up of alpha, epsilon, beta, gamma and delta chains with a probable stoichiometry of (alpha(2)epsilon(2))(4)-beta(8)-(gamma(1)delta(1))(8). The cofactor is corrinoid. [4Fe-4S] cluster is required as a cofactor.

It catalyses the reaction 5,6,7,8-tetrahydrosarcinapterin + methyl-Co(III)-[corrinoid Fe-S protein] = 5-methyltetrahydrosarcinapterin + Co(I)-[corrinoid Fe-S protein] + H(+). Functionally, part of a complex that catalyzes the reversible cleavage of acetyl-CoA, allowing autotrophic growth from CO(2). The chain is Acetyl-CoA decarbonylase/synthase complex subunit gamma from Methanopyrus kandleri (strain AV19 / DSM 6324 / JCM 9639 / NBRC 100938).